Here is a 941-residue protein sequence, read N- to C-terminus: Replicative DNA helicase DnaB (941 aa).

Residues 1–25 (MAEFEERPRLSIGEEEAPPYPLEKL) are disordered. One can recognise an SF4 helicase; first part domain in the interval 214-484 (RPGGITGVPS…PVYRLTTRLG (271 aa)). 245–252 (ARPSMGKT) contacts ATP. In terms of domain architecture, DOD-type homing endonuclease spans 534-683 (LLGHLIGDGC…VQSLLLRLGI (150 aa)). In terms of domain architecture, SF4 helicase; second part spans 646–915 (DGCIQMRRGK…ARFENLTMYQ (270 aa)). The interval 914-941 (YQPEPGTPLPETPDETILPSGPPDEAPF) is disordered.

The protein belongs to the helicase family. DnaB subfamily. In terms of assembly, homohexamer. In terms of processing, upon expression in E.coli this protein undergoes self splicing that involves a post-translational excision of the intervening region (intein) followed by peptide ligation.

It carries out the reaction Couples ATP hydrolysis with the unwinding of duplex DNA at the replication fork by translocating in the 5'-3' direction. This creates two antiparallel DNA single strands (ssDNA). The leading ssDNA polymer is the template for DNA polymerase III holoenzyme which synthesizes a continuous strand.. The enzyme catalyses ATP + H2O = ADP + phosphate + H(+). Its function is as follows. The main replicative DNA helicase, it participates in initiation and elongation during chromosome replication. Travels ahead of the DNA replisome, separating dsDNA into templates for DNA synthesis. A processive ATP-dependent 5'-3' DNA helicase it has DNA-dependent ATPase activity. Functionally, the intein is an endonuclease. This chain is Replicative DNA helicase DnaB, found in Rhodothermus marinus (Rhodothermus obamensis).